Reading from the N-terminus, the 792-residue chain is MRIPITLLQTYFSEPLSTKEILEACDHIGIEAEIENTTLYSFASVITAKILHTIPHPNADKLRVATLTDGEKEHQVVCGAPNCEAGLIVALALPGAKLFDSEGQAYTIKKSKLRGVESQGMCCGADELGLDELQIQERALLELPEATPLGEDLATVLGNTSLEISLTPNLGHCASFLGLAREICHVTQANLVIPKEFSFENLPTTALDMGNDPDICPFFSYVVITGISAQPSPIKLQESLQALKQKPINAIVDITNYIMLSLGQPLHAYDASHVALDSLRVEKLSTPESLTLLNGETVLLPSGVPVVRDDHSLLGLGGVMGAKAPSFQETTTTTVIKAAYFLPEALRASQKLLPIPSESAYRFTRGIDPQNVVPALQAAIHYILEIFPEATISPIYSSGEICRELKEVALRPKTLQRILGKSFSIEILSQKLQSLGFSTTPQETSLLVKVPSYRHDINEEIDLVEEICRTESWNIETQNPVSCYTPIYKLKRETAGFLANAGLQEFFTPDLLDPETVALTRKEKEEISLQGSKHTTVLRSSLLPGLLKSAATNLNRQAPSVQAFEIGTVYAKHGEQCQETQTLAILLTEDGESRSWLPKPSLSFYSLKGWVERLLYHHHLSIDALTLESSALCEFHPYQQGVLRIHKQSFATLGQVHPELAKKAQIKHPVFFAELNLDLLCKMLKKTTKLYKPYAIYPSSFRDLTLTVPEDIPANLLRQKLLHEGSKWLESVTIISIYQDKSLETRNKNVSLRLVFQDYERTLSNQDIEEEYCRLVALLNELLTDTKGTINS.

The 116-residue stretch at 39–154 (LYSFASVITA…EATPLGEDLA (116 aa)) folds into the tRNA-binding domain. The B5 domain maps to 403–480 (RELKEVALRP…ESWNIETQNP (78 aa)). Mg(2+) is bound by residues Asp-456, Asp-462, Glu-465, and Glu-466. One can recognise an FDX-ACB domain in the interval 695–791 (AIYPSSFRDL…LLTDTKGTIN (97 aa)).

Belongs to the phenylalanyl-tRNA synthetase beta subunit family. Type 1 subfamily. In terms of assembly, tetramer of two alpha and two beta subunits. The cofactor is Mg(2+).

It is found in the cytoplasm. It catalyses the reaction tRNA(Phe) + L-phenylalanine + ATP = L-phenylalanyl-tRNA(Phe) + AMP + diphosphate + H(+). This Chlamydia pneumoniae (Chlamydophila pneumoniae) protein is Phenylalanine--tRNA ligase beta subunit (pheT).